A 519-amino-acid chain; its full sequence is Nitrogen fixation regulatory protein (519 aa).

One can recognise a PAS 1 domain in the interval 23–93; the sequence is LPEIFRQTVE…QALWGRLAQK (71 aa). In terms of domain architecture, PAC spans 94 to 148; sequence KPWSGVLVNRRKDKTLYLAELTVAPVLNEAGETIYYLGMHRDTSELHELEQRVNN. The region spanning 151–217 is the PAS 2 domain; sequence LMIEAVVNAA…FETLENQGSA (67 aa). The Histidine kinase domain occupies 302 to 517; the sequence is AAIHRLQGPV…RIVVELPFSA (216 aa). His305 carries the post-translational modification Phosphohistidine; by autocatalysis.

FAD is required as a cofactor.

It carries out the reaction ATP + protein L-histidine = ADP + protein N-phospho-L-histidine.. Its function is as follows. Required for the inhibition of NifA activity in response to oxygen and low level of fixed nitrogen. This chain is Nitrogen fixation regulatory protein (nifL), found in Azotobacter vinelandii.